We begin with the raw amino-acid sequence, 567 residues long: Wee1-like protein kinase 2 (567 aa).

Composition is skewed to basic and acidic residues over residues 1-12 (MDDSSINKELKQ) and 26-36 (EGQKEAPESRE). Disordered stretches follow at residues 1–103 (MDDS…DSRS) and 170–191 (RSNGKRKTRGDLEEADPGEGKV). S77 bears the Phosphoserine mark. The Nuclear localization signal signature appears at 174 to 176 (KRK). The region spanning 215–494 (FLEVEKIGVG…ARSRVLRPSL (280 aa)) is the Protein kinase domain. Residues 221–229 (IGVGEFGTV) and K244 each bind ATP. Positions 318-332 (KLKDILLQISLGLKY) match the Nuclear export signal motif. Catalysis depends on D342, which acts as the Proton acceptor. Mg(2+)-binding residues include N347 and D384. A coiled-coil region spans residues 497–523 (AEELQQQLNLEKSKTATLERELREAQQ). Residues 502 to 567 (QQLNLEKSKT…SSFTCGKSSP (66 aa)) form a disordered region. A compositionally biased stretch (basic and acidic residues) spans 507 to 520 (EKSKTATLERELRE). The segment covering 555–567 (AKSSSFTCGKSSP) has biased composition (polar residues).

It belongs to the protein kinase superfamily. Ser/Thr protein kinase family. WEE1 subfamily. Phosphorylation leads to increase its activity.

The protein resides in the nucleus. The catalysed reaction is L-tyrosyl-[protein] + ATP = O-phospho-L-tyrosyl-[protein] + ADP + H(+). Functionally, oocyte-specific protein tyrosine kinase that phosphorylates and inhibits CDK1 and acts as a key regulator of meiosis during both prophase I and metaphase II. Required to maintain meiotic arrest in oocytes during the germinal vesicle (GV) stage, a long period of quiescence at dictyate prophase I, by phosphorylating CDK1 at 'Tyr-15', leading to inhibit CDK1 activity and prevent meiotic reentry. Also required for metaphase II exit during egg activation by phosphorylating CDK1 at 'Tyr-15', to ensure exit from meiosis in oocytes and promote pronuclear formation. This is Wee1-like protein kinase 2 (WEE2) from Canis lupus familiaris (Dog).